Consider the following 346-residue polypeptide: Protein RecA (346 aa).

Position 79–86 (79–86 (GPESSGKT)) interacts with ATP.

The protein belongs to the RecA family.

The protein resides in the cytoplasm. In terms of biological role, can catalyze the hydrolysis of ATP in the presence of single-stranded DNA, the ATP-dependent uptake of single-stranded DNA by duplex DNA, and the ATP-dependent hybridization of homologous single-stranded DNAs. It interacts with LexA causing its activation and leading to its autocatalytic cleavage. In Chlorobaculum tepidum (strain ATCC 49652 / DSM 12025 / NBRC 103806 / TLS) (Chlorobium tepidum), this protein is Protein RecA.